The following is a 119-amino-acid chain: Gas vesicle protein O1 (119 aa).

Residues 1–12 (MADPANDRSERE) show a composition bias toward basic and acidic residues. The disordered stretch occupies residues 1–48 (MADPANDRSEREEGGEDDETPPASDGNPSPSANSFTLSNAQTRAREAA). Polar residues predominate over residues 26–42 (GNPSPSANSFTLSNAQT).

Belongs to the gas vesicle GvpO family. In terms of assembly, forms homodimers, forms a GvpN1-GvpO1 heterodimer, interacts with GvpC1 (via the latter's C-terminus), GvpF1, GvpI1 and GvpL1, might interact with GvpA1.

It is found in the gas vesicle. The protein resides in the cytoplasm. Functionally, a minor component of the gas vesicle, also found in soluble extracts. May play a role in transcription and/or RNA stability and in GV assembly. Gas vesicles are hollow, gas filled proteinaceous nanostructures found in several microbial planktonic microorganisms. They allow positioning of halobacteria at the optimal depth for growth in the poorly aerated, shallow brine pools of their habitat. In terms of biological role, expression of a 9.5 kb p-vac DNA fragment containing 2 divergently transcribed regions (gvpD-gvpE-gvpF-gvpG-gvpH-gvpI-gvpJ-gvpK-gvpL-gvpM and gvpA-gvpC-gvpN-gvpO) allows H.volcanii to produce gas vesicles. A minimal gas vesicle can be made in H.volcanii by gvpA1-gvpO1 gvpF1-gvpG1-gvpJ1-gvpK1-gvpL1-gvpM1; lack of enough GvpJ1 prevents formation. The same region restores gas vesicle production in H.halobium without the p-vac locus, but it still has the c-vac locus. The polypeptide is Gas vesicle protein O1 (Halobacterium salinarum (strain ATCC 700922 / JCM 11081 / NRC-1) (Halobacterium halobium)).